A 234-amino-acid chain; its full sequence is N-(5'-phosphoribosyl)anthranilate isomerase 1 (234 aa).

It belongs to the TrpF family.

It carries out the reaction N-(5-phospho-beta-D-ribosyl)anthranilate = 1-(2-carboxyphenylamino)-1-deoxy-D-ribulose 5-phosphate. The protein operates within amino-acid biosynthesis; L-tryptophan biosynthesis; L-tryptophan from chorismate: step 3/5. The sequence is that of N-(5'-phosphoribosyl)anthranilate isomerase 1 (trpF1) from Methanosarcina mazei (strain ATCC BAA-159 / DSM 3647 / Goe1 / Go1 / JCM 11833 / OCM 88) (Methanosarcina frisia).